A 125-amino-acid polypeptide reads, in one-letter code: Flagellar protein FliT (125 aa).

A required for homodimerization region spans residues 1–50 (MDNKMDLLSAYQRILSLSEQMLNLAKNEKWDELVDMEITYLKAVEVISHS). The tract at residues 60–98 (LQQKMTNILQIILDNENEIKKLLQKRLDELSKLIKQASQ) is fliD binding.

Belongs to the FliT family. As to quaternary structure, homodimer. Interacts with FliD and FlhC.

Its subcellular location is the cytoplasm. It is found in the cytosol. Its function is as follows. Dual-function protein that regulates the transcription of class 2 flagellar operons and that also acts as an export chaperone for the filament-capping protein FliD. As a transcriptional regulator, acts as an anti-FlhDC factor; it directly binds FlhC, thus inhibiting the binding of the FlhC/FlhD complex to class 2 promoters, resulting in decreased expression of class 2 flagellar operons. As a chaperone, effects FliD transition to the membrane by preventing its premature polymerization, and by directing it to the export apparatus. This chain is Flagellar protein FliT, found in Photorhabdus laumondii subsp. laumondii (strain DSM 15139 / CIP 105565 / TT01) (Photorhabdus luminescens subsp. laumondii).